Reading from the N-terminus, the 200-residue chain is Holliday junction branch migration complex subunit RuvA (200 aa).

A domain I region spans residues 1–64 (MIGHLRGIIV…EDAHTLYGFH (64 aa)). Positions 65–143 (NDHERRLFRA…RWHTNDTPSP (79 aa)) are domain II. Positions 144–148 (EGLRS) are flexible linker. The segment at 149 to 200 (SNTQPTQDAISALMALGYKPQEAKRAIDAIQKPDLSAETLIRLALKQMVLGT) is domain III.

It belongs to the RuvA family. In terms of assembly, homotetramer. Forms an RuvA(8)-RuvB(12)-Holliday junction (HJ) complex. HJ DNA is sandwiched between 2 RuvA tetramers; dsDNA enters through RuvA and exits via RuvB. An RuvB hexamer assembles on each DNA strand where it exits the tetramer. Each RuvB hexamer is contacted by two RuvA subunits (via domain III) on 2 adjacent RuvB subunits; this complex drives branch migration. In the full resolvosome a probable DNA-RuvA(4)-RuvB(12)-RuvC(2) complex forms which resolves the HJ.

The protein resides in the cytoplasm. Its function is as follows. The RuvA-RuvB-RuvC complex processes Holliday junction (HJ) DNA during genetic recombination and DNA repair, while the RuvA-RuvB complex plays an important role in the rescue of blocked DNA replication forks via replication fork reversal (RFR). RuvA specifically binds to HJ cruciform DNA, conferring on it an open structure. The RuvB hexamer acts as an ATP-dependent pump, pulling dsDNA into and through the RuvAB complex. HJ branch migration allows RuvC to scan DNA until it finds its consensus sequence, where it cleaves and resolves the cruciform DNA. This Coxiella burnetii (strain CbuG_Q212) (Coxiella burnetii (strain Q212)) protein is Holliday junction branch migration complex subunit RuvA.